Reading from the N-terminus, the 310-residue chain is Pantothenate kinase (310 aa).

ATP is bound at residue 95–102; it reads GSVAVGKS.

Belongs to the prokaryotic pantothenate kinase family.

The protein localises to the cytoplasm. It catalyses the reaction (R)-pantothenate + ATP = (R)-4'-phosphopantothenate + ADP + H(+). It participates in cofactor biosynthesis; coenzyme A biosynthesis; CoA from (R)-pantothenate: step 1/5. This Rhodococcus erythropolis (strain PR4 / NBRC 100887) protein is Pantothenate kinase.